We begin with the raw amino-acid sequence, 661 residues long: Heme transporter BhuA (661 aa).

A signal peptide spans 1 to 23 (MKFTRTLVLASTSLLATVATSQA). A TBDR plug domain is found at 48-159 (KDNIEATGGT…AAGAIRYETV (112 aa)). The TBDR beta-barrel domain maps to 170 to 661 (TFGARIIGSY…TFTFQTAFKF (492 aa)).

This sequence belongs to the TonB-dependent receptor family.

The protein localises to the cell outer membrane. Functionally, heme transporter. In Brucella abortus biovar 1 (strain 9-941), this protein is Heme transporter BhuA (bhuA).